A 131-amino-acid chain; its full sequence is SPbeta prophage-derived uncharacterized protein YomZ (131 aa).

This chain is SPbeta prophage-derived uncharacterized protein YomZ (yomZ), found in Bacillus subtilis (strain 168).